The chain runs to 276 residues: Diaminopimelate epimerase (276 aa).

3 residues coordinate substrate: Asn13, Gln46, and Asn66. The Proton donor role is filled by Cys75. Substrate is bound by residues 76-77 (GN), Asn159, Asn192, and 210-211 (ER). Cys219 serves as the catalytic Proton acceptor. 220–221 (GT) contributes to the substrate binding site.

The protein belongs to the diaminopimelate epimerase family. As to quaternary structure, homodimer.

It localises to the cytoplasm. The enzyme catalyses (2S,6S)-2,6-diaminopimelate = meso-2,6-diaminopimelate. Its pathway is amino-acid biosynthesis; L-lysine biosynthesis via DAP pathway; DL-2,6-diaminopimelate from LL-2,6-diaminopimelate: step 1/1. Functionally, catalyzes the stereoinversion of LL-2,6-diaminopimelate (L,L-DAP) to meso-diaminopimelate (meso-DAP), a precursor of L-lysine and an essential component of the bacterial peptidoglycan. The protein is Diaminopimelate epimerase of Pseudoalteromonas translucida (strain TAC 125).